The chain runs to 249 residues: MAGHSKFKNIMYRKGAQDKKRSALFSKLSREVTVAAKSGLPDPNANPRLRAAVSAARSGGMPKDNIERAIAKAIGGDGDNYEELRYEGFGPSGVSLIIETLTDNRNRTATNVRTALSKNGGNLGTSGSVTHGFDRMGLITYKAEAGDPDKIFEAALEAGAEDVTSSEDEHEIWTAQADLHEVAGKLEAILGEPEGVKLAWRPQTLINVDEESAGTLLRLIETLEDDDDVQTVWANYDIDDEVMERLGQE.

Belongs to the TACO1 family.

It is found in the cytoplasm. This is Probable transcriptional regulatory protein ZMO0153 from Zymomonas mobilis subsp. mobilis (strain ATCC 31821 / ZM4 / CP4).